A 172-amino-acid chain; its full sequence is Adenine phosphoribosyltransferase (172 aa).

It belongs to the purine/pyrimidine phosphoribosyltransferase family. As to quaternary structure, homodimer.

Its subcellular location is the cytoplasm. It carries out the reaction AMP + diphosphate = 5-phospho-alpha-D-ribose 1-diphosphate + adenine. The protein operates within purine metabolism; AMP biosynthesis via salvage pathway; AMP from adenine: step 1/1. Catalyzes a salvage reaction resulting in the formation of AMP, that is energically less costly than de novo synthesis. This chain is Adenine phosphoribosyltransferase, found in Malacoplasma penetrans (strain HF-2) (Mycoplasma penetrans).